The primary structure comprises 878 residues: NUT family member 2B (878 aa).

Disordered stretches follow at residues Trp273 to Cys324, Gln417 to Ile512, Leu527 to Pro560, Pro624 to Arg693, Leu709 to Glu757, and Trp775 to Gln878. Composition is skewed to pro residues over residues Pro278 to Gln288 and Cys427 to Pro444. A compositionally biased stretch (basic residues) spans Thr476–Arg487. Over residues Glu537 to Gln551 the composition is skewed to basic and acidic residues.

This sequence belongs to the NUT family.

This Homo sapiens (Human) protein is NUT family member 2B (NUTM2B).